The primary structure comprises 350 residues: Alcohol dehydrogenase 1 (350 aa).

Zn(2+) is bound by residues C46, H69, C100, C103, C106, C114, and C156. NAD(+) is bound by residues 180-186, D204, K209, 271-273, and R343; these read GAGGGLG and VGL.

It belongs to the zinc-containing alcohol dehydrogenase family. Homotetramer. Requires Zn(2+) as cofactor.

It localises to the cytoplasm. The enzyme catalyses a primary alcohol + NAD(+) = an aldehyde + NADH + H(+). It carries out the reaction a secondary alcohol + NAD(+) = a ketone + NADH + H(+). The chain is Alcohol dehydrogenase 1 (ADH1) from Candida albicans (Yeast).